Consider the following 263-residue polypeptide: Pyridoxine 5'-phosphate synthase (263 aa).

Residue Asn15 participates in 3-amino-2-oxopropyl phosphate binding. 17–18 (DH) contributes to the 1-deoxy-D-xylulose 5-phosphate binding site. A 3-amino-2-oxopropyl phosphate-binding site is contributed by Arg26. Residue His51 is the Proton acceptor of the active site. 1-deoxy-D-xylulose 5-phosphate is bound by residues Arg53 and His58. The active-site Proton acceptor is the Glu78. Thr108 is a binding site for 1-deoxy-D-xylulose 5-phosphate. The active-site Proton donor is His199. Residues Gly200 and 221–222 (GH) each bind 3-amino-2-oxopropyl phosphate.

The protein belongs to the PNP synthase family. As to quaternary structure, homooctamer; tetramer of dimers.

The protein resides in the cytoplasm. The catalysed reaction is 3-amino-2-oxopropyl phosphate + 1-deoxy-D-xylulose 5-phosphate = pyridoxine 5'-phosphate + phosphate + 2 H2O + H(+). Its pathway is cofactor biosynthesis; pyridoxine 5'-phosphate biosynthesis; pyridoxine 5'-phosphate from D-erythrose 4-phosphate: step 5/5. In terms of biological role, catalyzes the complicated ring closure reaction between the two acyclic compounds 1-deoxy-D-xylulose-5-phosphate (DXP) and 3-amino-2-oxopropyl phosphate (1-amino-acetone-3-phosphate or AAP) to form pyridoxine 5'-phosphate (PNP) and inorganic phosphate. This Ralstonia nicotianae (strain ATCC BAA-1114 / GMI1000) (Ralstonia solanacearum) protein is Pyridoxine 5'-phosphate synthase.